The following is a 1167-amino-acid chain: ATP-dependent helicase/deoxyribonuclease subunit B (1167 aa).

The UvrD-like helicase ATP-binding domain maps to 1 to 359; the sequence is MSLRFLLGRS…IRQTEAYRDL (359 aa). ATP is bound at residue 8 to 15; the sequence is GRSGSGKT. Residues 282 to 588 form the UvrD-like helicase C-terminal domain; it reads VNRRHQDKAL…EFALVPPAID (307 aa). 4 residues coordinate [4Fe-4S] cluster: Cys803, Cys1125, Cys1128, and Cys1134.

The protein belongs to the helicase family. AddB/RexB type 1 subfamily. In terms of assembly, heterodimer of AddA and AddB. Requires Mg(2+) as cofactor. [4Fe-4S] cluster serves as cofactor.

The heterodimer acts as both an ATP-dependent DNA helicase and an ATP-dependent, dual-direction single-stranded exonuclease. Recognizes the chi site generating a DNA molecule suitable for the initiation of homologous recombination. The AddB subunit has 5' -&gt; 3' nuclease activity but not helicase activity. This Geobacillus thermodenitrificans (strain NG80-2) protein is ATP-dependent helicase/deoxyribonuclease subunit B.